The following is a 500-amino-acid chain: E3 ubiquitin-protein ligase TRIM4 (500 aa).

Residues Cys12–Arg53 form an RING-type zinc finger. A B box-type zinc finger spans residues Val82–Ile123. Positions 87, 90, 109, and 115 each coordinate Zn(2+). Positions Glu212–Val253 form a coiled coil. A B30.2/SPRY domain is found at Lys288–Lys500.

Belongs to the TRIM/RBCC family. Homotrimer.

The protein resides in the cytoplasm. The enzyme catalyses S-ubiquitinyl-[E2 ubiquitin-conjugating enzyme]-L-cysteine + [acceptor protein]-L-lysine = [E2 ubiquitin-conjugating enzyme]-L-cysteine + N(6)-ubiquitinyl-[acceptor protein]-L-lysine.. It participates in protein modification; protein ubiquitination. Functionally, E3 ubiquitin-protein ligase. Mediates 'Lys-63'-linked polyubiquitination of the innate immune receptor RIGI, this linkage doesn't lead to proteasomal degradation but seems to enhance IFN induction. In Homo sapiens (Human), this protein is E3 ubiquitin-protein ligase TRIM4 (TRIM4).